The primary structure comprises 524 residues: Cysteine--tRNA ligase (524 aa).

C29 lines the Zn(2+) pocket. Positions 31–41 (PTVQAAPHVGH) match the 'HIGH' region motif. Residues C207, H232, and E236 each contribute to the Zn(2+) site. Over residues 246 to 258 (ARPASNAASADSP) the composition is skewed to low complexity. Positions 246–273 (ARPASNAASADSPGPGGGEPGGGEPSSG) are disordered. Residues 259–270 (GPGGGEPGGGEP) are compositionally biased toward gly residues. The 'KMSKS' region motif lies at 291–295 (KMSKS). An ATP-binding site is contributed by K294.

The protein belongs to the class-I aminoacyl-tRNA synthetase family. As to quaternary structure, monomer. Zn(2+) serves as cofactor.

The protein resides in the cytoplasm. It carries out the reaction tRNA(Cys) + L-cysteine + ATP = L-cysteinyl-tRNA(Cys) + AMP + diphosphate. The protein is Cysteine--tRNA ligase of Frankia casuarinae (strain DSM 45818 / CECT 9043 / HFP020203 / CcI3).